The following is a 467-amino-acid chain: Squalene synthase (467 aa).

It belongs to the phytoene/squalene synthase family. The cofactor is Mg(2+).

It carries out the reaction 2 (2E,6E)-farnesyl diphosphate + NADPH + H(+) = squalene + 2 diphosphate + NADP(+). The catalysed reaction is 2 (2E,6E)-farnesyl diphosphate + NADH + H(+) = squalene + 2 diphosphate + NAD(+). The protein operates within terpene metabolism; lanosterol biosynthesis; lanosterol from farnesyl diphosphate: step 1/3. In terms of biological role, squalene synthase; part of the third module of ergosterol biosynthesis pathway that includes the late steps of the pathway. The third module or late pathway involves the ergosterol synthesis itself through consecutive reactions that mainly occur in the endoplasmic reticulum (ER) membrane. Firstly, the squalene synthase SQS catalyzes the condensation of 2 farnesyl pyrophosphate moieties to form squalene, which is the precursor of all steroids. Secondly, the squalene epoxidase catalyzes the stereospecific oxidation of squalene to (S)-2,3-epoxysqualene, which is considered to be a rate-limiting enzyme in steroid biosynthesis. Then, the lanosterol synthase LS catalyzes the cyclization of (S)-2,3 oxidosqualene to lanosterol, a reaction that forms the sterol core. In the next steps, lanosterol is transformed to ergosterol via a complex process involving various demethylation, reduction and desaturation reactions. Lanosterol is also an intermediate in the biosynthesis of triterpenes such as ganoderic acids (GA), a group of highly oxygenated lanostane-type triterpenoids which are well recognized as a main group of unique bioactive compounds in the medicinal mushroom Ganoderma lucidum. This chain is Squalene synthase, found in Ganoderma lucidum (Ling zhi medicinal fungus).